A 355-amino-acid polypeptide reads, in one-letter code: uncharacterized protein (355 aa).

Helical transmembrane passes span 275-295 (SLIVLQSILAVVFGAGLFVAF), 301-321 (WNSIVALVLSVLVILGLVVGV), and 330-350 (IASTLIAVVVGALITLGPLAL).

The protein to M.tuberculosis Rv0497.

It is found in the cell membrane. This is an uncharacterized protein from Mycobacterium leprae (strain TN).